Reading from the N-terminus, the 216-residue chain is Uracil phosphoribosyltransferase (216 aa).

5-phospho-alpha-D-ribose 1-diphosphate contacts are provided by residues arginine 85, arginine 110, and 135–143; that span reads DPMVATGYS. Uracil is bound by residues isoleucine 200 and 205 to 207; that span reads GDA. Aspartate 206 serves as a coordination point for 5-phospho-alpha-D-ribose 1-diphosphate.

This sequence belongs to the UPRTase family. Mg(2+) serves as cofactor.

The enzyme catalyses UMP + diphosphate = 5-phospho-alpha-D-ribose 1-diphosphate + uracil. Its pathway is pyrimidine metabolism; UMP biosynthesis via salvage pathway; UMP from uracil: step 1/1. Its activity is regulated as follows. Allosterically activated by GTP. Catalyzes the conversion of uracil and 5-phospho-alpha-D-ribose 1-diphosphate (PRPP) to UMP and diphosphate. The protein is Uracil phosphoribosyltransferase of Burkholderia multivorans (strain ATCC 17616 / 249).